The chain runs to 255 residues: Hydroxyacylglutathione hydrolase (255 aa).

7 residues coordinate Zn(2+): His56, His58, Asp60, His61, His114, Asp133, and His171.

This sequence belongs to the metallo-beta-lactamase superfamily. Glyoxalase II family. In terms of assembly, monomer. It depends on Zn(2+) as a cofactor.

It catalyses the reaction an S-(2-hydroxyacyl)glutathione + H2O = a 2-hydroxy carboxylate + glutathione + H(+). Its pathway is secondary metabolite metabolism; methylglyoxal degradation; (R)-lactate from methylglyoxal: step 2/2. Its function is as follows. Thiolesterase that catalyzes the hydrolysis of S-D-lactoyl-glutathione to form glutathione and D-lactic acid. The sequence is that of Hydroxyacylglutathione hydrolase from Rhodopseudomonas palustris (strain HaA2).